The primary structure comprises 78 residues: Large ribosomal subunit protein bL31 (78 aa).

Residues Cys-16, Cys-18, Cys-38, and Cys-41 each contribute to the Zn(2+) site.

The protein belongs to the bacterial ribosomal protein bL31 family. Type A subfamily. Part of the 50S ribosomal subunit. It depends on Zn(2+) as a cofactor.

In terms of biological role, binds the 23S rRNA. This is Large ribosomal subunit protein bL31 from Frankia casuarinae (strain DSM 45818 / CECT 9043 / HFP020203 / CcI3).